The chain runs to 288 residues: NGG1-interacting factor 3 (288 aa).

This sequence belongs to the GTP cyclohydrolase I type 2/NIF3 family. May interact with NGG1.

The protein resides in the mitochondrion. The protein is NGG1-interacting factor 3 of Saccharomyces cerevisiae (strain ATCC 204508 / S288c) (Baker's yeast).